Reading from the N-terminus, the 277-residue chain is Tryptophan synthase alpha chain (277 aa).

Active-site proton acceptor residues include E59 and D70.

Belongs to the TrpA family. In terms of assembly, tetramer of two alpha and two beta chains.

The enzyme catalyses (1S,2R)-1-C-(indol-3-yl)glycerol 3-phosphate + L-serine = D-glyceraldehyde 3-phosphate + L-tryptophan + H2O. It participates in amino-acid biosynthesis; L-tryptophan biosynthesis; L-tryptophan from chorismate: step 5/5. Its function is as follows. The alpha subunit is responsible for the aldol cleavage of indoleglycerol phosphate to indole and glyceraldehyde 3-phosphate. This chain is Tryptophan synthase alpha chain, found in Streptomyces avermitilis (strain ATCC 31267 / DSM 46492 / JCM 5070 / NBRC 14893 / NCIMB 12804 / NRRL 8165 / MA-4680).